The sequence spans 249 residues: Probable phosphoglycerate mutase (249 aa).

Substrate contacts are provided by residues 9–16, 22–23, Arg-61, 88–91, Lys-99, 115–116, and 184–185; these read RHGESTWN, TG, ERMY, RR, and GN. The active-site Tele-phosphohistidine intermediate is the His-10. The active-site Proton donor/acceptor is Glu-88.

Belongs to the phosphoglycerate mutase family. BPG-dependent PGAM subfamily. Homodimer.

The catalysed reaction is (2R)-2-phosphoglycerate = (2R)-3-phosphoglycerate. It carries out the reaction (2R)-3-phospho-glyceroyl phosphate = (2R)-2,3-bisphosphoglycerate + H(+). Functionally, catalyzes the interconversion of 2-phosphoglycerate and 3-phosphoglycerate. This Dictyostelium discoideum (Social amoeba) protein is Probable phosphoglycerate mutase (gpmA).